Reading from the N-terminus, the 873-residue chain is Potassium voltage-gated channel subfamily KQT member 3 (873 aa).

The disordered stretch occupies residues 1-41 (MGLKARRAAGAAGGGGGEGGGGGGGAANPAGGDSAVAGDEE). Over 1–121 (MGLKARRAAG…IYDALERPRG (121 aa)) the chain is Cytoplasmic. Over residues 11–26 (AAGGGGGEGGGGGGGA) the composition is skewed to gly residues. Thr82 bears the Phosphothreonine mark. Residues 122 to 144 (WALLYHALVFLIVLGCLILAVLT) traverse the membrane as a helical segment. The Extracellular portion of the chain corresponds to 145–154 (TFKEYETVSG). A helical membrane pass occupies residues 155 to 176 (DWLLLLETFAIFIFGAEFALRI). Residues 177 to 194 (WAAGCCCRYKGWRGRLKF) lie on the Cytoplasmic side of the membrane. The helical transmembrane segment at 195-214 (ARKPLCMLDIFVLIASVPVV) threads the bilayer. Over 215-226 (AVGNQGNVLATS) the chain is Extracellular. A helical; Voltage-sensor transmembrane segment spans residues 227–245 (LRSLRFLQILRMLRMDRRG). Arg244 is a binding site for a 1,2-diacyl-sn-glycero-3-phospho-(1D-myo-inositol-4,5-bisphosphate). Residues 246–257 (GTWKLLGSAICA) are Cytoplasmic-facing. Residues 258-283 (HSKELITAWYIGFLTLILSSFLVYLV) form a helical membrane-spanning segment. Position 260 (Lys260) interacts with a 1,2-diacyl-sn-glycero-3-phospho-(1D-myo-inositol-4,5-bisphosphate). Topologically, residues 284 to 303 (EKDVPEMDAQGEEMKEEFET) are extracellular. An intramembrane region (pore-forming) is located at residues 304–316 (YADALWWGLITLA). Positions 317–322 (TIGYGD) match the Selectivity filter motif. The Extracellular portion of the chain corresponds to 317–327 (TIGYGDKTPKT). Residues 328-354 (WEGRLIAATFSLIGVSFFALPAGILGS) traverse the membrane as a helical segment. Residues 355-873 (GLALKVQEQH…SIWTPSNKPT (519 aa)) are Cytoplasmic-facing. Positions 357 to 538 (ALKVQEQHRQ…RLYKKKFKET (182 aa)) are mediates interaction with calmodulin. Lys367 is an a 1,2-diacyl-sn-glycero-3-phospho-(1D-myo-inositol-4,5-bisphosphate) binding site. 3 disordered regions span residues 575–603 (PGPPSTPKHKKSQKGSAFTYPSQQSPRNE), 723–742 (RGGPSSTKAQANLPSSGSTY), and 766–873 (ELQG…NKPT). 3 stretches are compositionally biased toward polar residues: residues 588 to 601 (KGSAFTYPSQQSPR), 725 to 741 (GPSSTKAQANLPSSGST), and 844 to 873 (DPFTPSGSMPMSSTGDGISDSIWTPSNKPT).

Belongs to the potassium channel family. KQT (TC 1.A.1.15) subfamily. Kv7.3/KCNQ3 sub-subfamily. In terms of assembly, heterotetramer with KCNQ2; forms heterotetrameric native M-channel responsible for the M-current. Interacts with calmodulin; the interaction is calcium-independent, constitutive and participates in the proper assembly of a functional M-channel. Heteromultimer with KCNQ5. May associate with KCNE2. Interacts with IQCJ-SCHIP1. Interacts (via the pore module) with SLC5A3/SMIT1; forms a coregulatory complex that alters ion selectivity, voltage dependence and gating kinetics of the channel. KCNQ2/KCNQ3 are ubiquitinated by NEDD4L. Ubiquitination leads to protein degradation. Degradation induced by NEDD4L is inhibited by USP36. Expressed in dorsal root ganglion (DRG) neurons.

The protein localises to the cell membrane. The enzyme catalyses K(+)(in) = K(+)(out). The catalysed reaction is Rb(+)(in) = Rb(+)(out). It carries out the reaction Cs(+)(in) = Cs(+)(out). It catalyses the reaction Na(+)(in) = Na(+)(out). Phosphatidylinositol-4,5-bisphosphate (PIP2) potentiates the activation of KCNQ channels by enhancing the electro-mechanical coupling of the voltage-sensing domain (VSD) and the pore-forming domain (PD). In the closed state of the channel, PIP2 is anchored at the S2-S3 loop; upon channel activation, PIP2 interacts with the S4-S5 linker and is involved in channel gating. Calcium suppresses KCNQ2-KCNQ3 channel currents, with calcium-bound calmodulin inducing a change in channel configuration which leads to the reduction of channel affinity for PIP2 and subsequent current suppression. Its function is as follows. Pore-forming subunit of the voltage-gated potassium (Kv) M-channel which is responsible for the M-current, a key controller of neuronal excitability. M-channel is composed of pore-forming subunits KCNQ2 and KCNQ3 assembled as heterotetramers. The native M-current has a slowly activating and deactivating potassium conductance which plays a critical role in determining the subthreshold electrical excitability of neurons as well as the responsiveness to synaptic inputs. M-channel is selectively permeable in vitro to other cations besides potassium, in decreasing order of affinity K(+) &gt; Rb(+) &gt; Cs(+) &gt; Na(+). M-channel association with SLC5A3/SMIT1 alters channel ion selectivity, increasing Na(+) and Cs(+) permeation relative to K(+). Suppressed by activation of M1 muscarinic acetylcholine receptors. KCNQ3 also associates with KCNQ5 to form a functional channel in vitro and may also contribute to the M-current in brain. The polypeptide is Potassium voltage-gated channel subfamily KQT member 3 (Mus musculus (Mouse)).